A 449-amino-acid chain; its full sequence is Chromosomal replication initiator protein DnaA (449 aa).

The domain I, interacts with DnaA modulators stretch occupies residues 1 to 73; it reads MTQNPQWLWQ…TETIAELLQQ (73 aa). The domain II stretch occupies residues 73–109; the sequence is QPVKVRLTSPEGNTLAATQSFYSSRSGQSTRPGKKTP. Polar residues predominate over residues 90-103; the sequence is TQSFYSSRSGQSTR. The disordered stretch occupies residues 90-110; sequence TQSFYSSRSGQSTRPGKKTPE. A domain III, AAA+ region region spans residues 110–326; it reads ELNSKYTFSR…GALLRAVTHI (217 aa). Residues glycine 154, glycine 156, lysine 157, and threonine 158 each contribute to the ATP site. Residues 327 to 449 are domain IV, binds dsDNA; sequence AISGLPMTVE…DRINHHHQNL (123 aa).

Belongs to the DnaA family. As to quaternary structure, oligomerizes as a right-handed, spiral filament on DNA at oriC.

Its subcellular location is the cytoplasm. Functionally, plays an essential role in the initiation and regulation of chromosomal replication. ATP-DnaA binds to the origin of replication (oriC) to initiate formation of the DNA replication initiation complex once per cell cycle. Binds the DnaA box (a 9 base pair repeat at the origin) and separates the double-stranded (ds)DNA. Forms a right-handed helical filament on oriC DNA; dsDNA binds to the exterior of the filament while single-stranded (ss)DNA is stabiized in the filament's interior. The ATP-DnaA-oriC complex binds and stabilizes one strand of the AT-rich DNA unwinding element (DUE), permitting loading of DNA polymerase. After initiation quickly degrades to an ADP-DnaA complex that is not apt for DNA replication. Binds acidic phospholipids. The sequence is that of Chromosomal replication initiator protein DnaA from Picosynechococcus sp. (strain ATCC 27264 / PCC 7002 / PR-6) (Agmenellum quadruplicatum).